Here is a 59-residue protein sequence, read N- to C-terminus: MAVQQNKKSPSKRGMHRSHDFLTTSPLAVEPSTGEVHLRHHISPNGYYRGKKVVKTKND.

The disordered stretch occupies residues 1 to 59; sequence MAVQQNKKSPSKRGMHRSHDFLTTSPLAVEPSTGEVHLRHHISPNGYYRGKKVVKTKND. The span at 49-59 shows a compositional bias: basic residues; the sequence is RGKKVVKTKND.

The protein belongs to the bacterial ribosomal protein bL32 family.

This is Large ribosomal subunit protein bL32 from Burkholderia mallei (strain NCTC 10247).